A 298-amino-acid polypeptide reads, in one-letter code: Probable endonuclease 4 (298 aa).

Zn(2+) is bound by residues His-69, His-110, Glu-145, Asp-179, His-182, His-214, Asp-227, His-229, and Glu-259.

This sequence belongs to the AP endonuclease 2 family. Zn(2+) serves as cofactor.

It carries out the reaction Endonucleolytic cleavage to 5'-phosphooligonucleotide end-products.. Endonuclease IV plays a role in DNA repair. It cleaves phosphodiester bonds at apurinic or apyrimidinic (AP) sites, generating a 3'-hydroxyl group and a 5'-terminal sugar phosphate. The chain is Probable endonuclease 4 from Geobacillus sp. (strain WCH70).